Consider the following 222-residue polypeptide: Global nitrogen regulator (222 aa).

Position 6–128 (6–128 (NSLLTMFREL…NVMLQGLSSR (123 aa))) interacts with a nucleoside 3',5'-cyclic phosphate. Residues 142-215 (RDMGSRLVSF…KKRITVFNPV (74 aa)) enclose the HTH crp-type domain. Residues 175 to 194 (HQAIAEAIGSTRVTVTRLLG) constitute a DNA-binding region (H-T-H motif).

In terms of biological role, required for full expression of proteins subject to ammonium repression. Transcriptional activator of genes subject to nitrogen control. The chain is Global nitrogen regulator (ntcA) from Synechococcus elongatus (strain ATCC 33912 / PCC 7942 / FACHB-805) (Anacystis nidulans R2).